The chain runs to 285 residues: Protein phosphatase 1 regulatory subunit 3C (285 aa).

Positions 72–75 (KVVF) match the PP1-binding motif motif. The region spanning 133-241 (RKRLMKNSVC…NNNGKNYALV (109 aa)) is the CBM21 domain.

As to quaternary structure, interacts with PPP1CC catalytic subunit of PP1 and associates with glycogen. Forms complexes with glycogen phosphorylase, glycogen synthase and phosphorylase kinase which is necessary for its regulation of PP1 activity. Ubiquitously expressed in the examined tissues including brain, muscle, liver and spleen under normoxic condition. Its expression is higher in insulin sensitive tissues (liver and muscle) than in the brain and spleen. Significantly increased expression in the liver and muscle under short-term (1-12 hours) hypoxia exposure. Significantly increased expression after long-term (natural) hypoxia exposure in liver and spleen. No significant differences in expression in brain for any time periods.

Functionally, acts as a glycogen-targeting subunit for PP1 and regulates its activity. Activates glycogen synthase, reduces glycogen phosphorylase activity and limits glycogen breakdown. This is Protein phosphatase 1 regulatory subunit 3C from Clarias batrachus (Walking catfish).